Here is a 184-residue protein sequence, read N- to C-terminus: Large ribosomal subunit protein uL6 (184 aa).

The protein belongs to the universal ribosomal protein uL6 family. In terms of assembly, part of the 50S ribosomal subunit.

Its function is as follows. This protein binds to the 23S rRNA, and is important in its secondary structure. It is located near the subunit interface in the base of the L7/L12 stalk, and near the tRNA binding site of the peptidyltransferase center. This Aster yellows witches'-broom phytoplasma (strain AYWB) protein is Large ribosomal subunit protein uL6.